The chain runs to 160 residues: Ribonuclease ARB_07070 (160 aa).

Residues 1–18 form the signal peptide; that stretch reads MVSFKAILTLSLIGAAFA. Residues 26–51 are disordered; it reads AEPVEDSGAVANSPEGSGMDLGGTDP. The active-site Proton acceptor is the Glu-103. The active-site Proton donor is the His-144.

This sequence belongs to the ribonuclease U2 family.

It localises to the secreted. Its function is as follows. This purine-specific ribonuclease cleaves 28S RNA in eukaryotic ribosomes, inhibits protein synthesis, and shows antitumor activity. The chain is Ribonuclease ARB_07070 from Arthroderma benhamiae (strain ATCC MYA-4681 / CBS 112371) (Trichophyton mentagrophytes).